Here is a 573-residue protein sequence, read N- to C-terminus: Lauric acid 10-hydroxylase (573 aa).

Transmembrane regions (helical) follow at residues 3–23 and 298–318; these read YVNILLGLFFTWFLVNGLMSL and LFPTPFLPFIIICPFLYLLIF. C516 lines the heme pocket.

It belongs to the cytochrome P450 family. The cofactor is heme. As to expression, mostly expressed in flowers and leaves and, at low levels, in roots and stems.

The protein resides in the endoplasmic reticulum membrane. The enzyme catalyses an omega-methyl-medium-chain fatty acid + reduced [NADPH--hemoprotein reductase] + O2 = an omega-hydroxy-medium-chain fatty acid + oxidized [NADPH--hemoprotein reductase] + H2O + H(+). It carries out the reaction decanoate + reduced [NADPH--hemoprotein reductase] + O2 = 10-hydroxydecanoate + oxidized [NADPH--hemoprotein reductase] + H2O + H(+). The catalysed reaction is dodecanoate + reduced [NADPH--hemoprotein reductase] + O2 = 12-hydroxydodecanoate + oxidized [NADPH--hemoprotein reductase] + H2O + H(+). Its pathway is lipid metabolism; fatty acid metabolism. In terms of biological role, cytochrome P450 hydroxylase catalyzing the conversion of decanoate (capric acid) and dodecanoate (lauric acid) to their corresponding omega-hydroxy metabolites, 10-hydroxydecanoate and 12-hydroxydodecanoate, respectively; these hydroxylated components affect plant growth, including reducing root elongation. This is Lauric acid 10-hydroxylase from Petunia hybrida (Petunia).